The chain runs to 136 residues: MEEELLSAVPCSSLTVESVLRVATAGGLYGLCAGPRDARKIGLSGVSQASFVAKSIGRFGFQCGLVSGVFTMTHCGLQRYRGKNDWVNALVGGAVAGAAVAISTRNWTQVVGMAGLVSAFSVLANCTRTENPNNTN.

Positions 1–59 (MEEELLSAVPCSSLTVESVLRVATAGGLYGLCAGPRDARKIGLSGVSQASFVAKSIGRF) are contains 4 beta strands. 4 helical membrane passes run 18-34 (SVLR…LCAG), 56-72 (IGRF…VFTM), 86-102 (WVNA…AVAI), and 110-126 (VVGM…LANC).

It belongs to the Tim17/Tim22/Tim23 family. Plastid outer envelope porin OEP16 (TC 1.B.30) subfamily. In terms of assembly, homodimer and oligomers in membrane.

It is found in the plastid. It localises to the chloroplast outer membrane. In terms of biological role, voltage-dependent high-conductance channel with a slight cation-selectivity; selective for amino acids but excludes triosephosphates or uncharged sugars. Non-essential amino acid-selective channel protein and translocation pore for NADPH:protochlorophyllide oxidoreductase A (PORA) and possibly PORB. The sequence is that of Outer envelope pore protein 16-4, chloroplastic (OEP164) from Arabidopsis thaliana (Mouse-ear cress).